The chain runs to 102 residues: Citrate lyase acyl carrier protein (102 aa).

Position 14 is an O-(phosphoribosyl dephospho-coenzyme A)serine (Ser14).

Belongs to the CitD family. In terms of assembly, oligomer with a subunit composition of (alpha,beta,gamma)6.

Its subcellular location is the cytoplasm. In terms of biological role, covalent carrier of the coenzyme of citrate lyase. This is Citrate lyase acyl carrier protein from Streptococcus equi subsp. equi (strain 4047).